We begin with the raw amino-acid sequence, 410 residues long: 2-oxoisovalerate dehydrogenase subunit alpha (410 aa).

Belongs to the BCKDHA family. In terms of assembly, heterodimer of an alpha and a beta chain. Thiamine diphosphate is required as a cofactor.

The enzyme catalyses N(6)-[(R)-lipoyl]-L-lysyl-[protein] + 3-methyl-2-oxobutanoate + H(+) = N(6)-[(R)-S(8)-2-methylpropanoyldihydrolipoyl]-L-lysyl-[protein] + CO2. The branched-chain alpha-keto dehydrogenase complex catalyzes the overall conversion of alpha-keto acids to acyl-CoA and CO(2). It contains multiple copies of three enzymatic components: branched-chain alpha-keto acid decarboxylase (E1), lipoamide acyltransferase (E2) and lipoamide dehydrogenase (E3). In Pseudomonas putida (Arthrobacter siderocapsulatus), this protein is 2-oxoisovalerate dehydrogenase subunit alpha (bkdA1).